The sequence spans 182 residues: Isopentenyl-diphosphate Delta-isomerase (182 aa).

Positions 25 and 32 each coordinate Mn(2+). The 135-residue stretch at 30-164 folds into the Nudix hydrolase domain; sequence LLHLAFSSWL…PWAFSPWMVM (135 aa). Cys67 is an active-site residue. His69 provides a ligand contact to Mn(2+). Glu87 contributes to the Mg(2+) binding site. Mn(2+)-binding residues include Glu114 and Glu116. Residue Glu116 is part of the active site.

This sequence belongs to the IPP isomerase type 1 family. In terms of assembly, homodimer. The cofactor is Mg(2+). Requires Mn(2+) as cofactor.

The protein resides in the cytoplasm. It carries out the reaction isopentenyl diphosphate = dimethylallyl diphosphate. It participates in isoprenoid biosynthesis; dimethylallyl diphosphate biosynthesis; dimethylallyl diphosphate from isopentenyl diphosphate: step 1/1. Catalyzes the 1,3-allylic rearrangement of the homoallylic substrate isopentenyl (IPP) to its highly electrophilic allylic isomer, dimethylallyl diphosphate (DMAPP). This Escherichia coli O9:H4 (strain HS) protein is Isopentenyl-diphosphate Delta-isomerase.